Here is a 162-residue protein sequence, read N- to C-terminus: Protein-export protein SecB (162 aa).

It belongs to the SecB family. In terms of assembly, homotetramer, a dimer of dimers. One homotetramer interacts with 1 SecA dimer.

It is found in the cytoplasm. One of the proteins required for the normal export of preproteins out of the cell cytoplasm. It is a molecular chaperone that binds to a subset of precursor proteins, maintaining them in a translocation-competent state. It also specifically binds to its receptor SecA. The polypeptide is Protein-export protein SecB (Pseudoalteromonas translucida (strain TAC 125)).